The sequence spans 376 residues: tRNA 2-selenouridine synthase (376 aa).

The region spanning 15 to 138 (FVAGKPLIDL…MRQYLIGVIE (124 aa)) is the Rhodanese domain. The active-site S-selanylcysteine intermediate is the C98.

This sequence belongs to the SelU family. As to quaternary structure, monomer.

It catalyses the reaction 5-methylaminomethyl-2-thiouridine(34) in tRNA + selenophosphate + (2E)-geranyl diphosphate + H2O + H(+) = 5-methylaminomethyl-2-selenouridine(34) in tRNA + (2E)-thiogeraniol + phosphate + diphosphate. It carries out the reaction 5-methylaminomethyl-2-thiouridine(34) in tRNA + (2E)-geranyl diphosphate = 5-methylaminomethyl-S-(2E)-geranyl-thiouridine(34) in tRNA + diphosphate. The catalysed reaction is 5-methylaminomethyl-S-(2E)-geranyl-thiouridine(34) in tRNA + selenophosphate + H(+) = 5-methylaminomethyl-2-(Se-phospho)selenouridine(34) in tRNA + (2E)-thiogeraniol. The enzyme catalyses 5-methylaminomethyl-2-(Se-phospho)selenouridine(34) in tRNA + H2O = 5-methylaminomethyl-2-selenouridine(34) in tRNA + phosphate. Functionally, involved in the post-transcriptional modification of the uridine at the wobble position (U34) of tRNA(Lys), tRNA(Glu) and tRNA(Gln). Catalyzes the conversion of 2-thiouridine (S2U-RNA) to 2-selenouridine (Se2U-RNA). Acts in a two-step process involving geranylation of 2-thiouridine (S2U) to S-geranyl-2-thiouridine (geS2U) and subsequent selenation of the latter derivative to 2-selenouridine (Se2U) in the tRNA chain. This chain is tRNA 2-selenouridine synthase, found in Shewanella oneidensis (strain ATCC 700550 / JCM 31522 / CIP 106686 / LMG 19005 / NCIMB 14063 / MR-1).